We begin with the raw amino-acid sequence, 237 residues long: E3 ubiquitin-protein ligase RNF166 (237 aa).

An RING-type zinc finger spans residues 33 to 73 (CPICLEVYHRPVAIGSCGHTFCGECLQPCLQVPSPLCPLCR). Positions 98, 101, 113, and 117 each coordinate Zn(2+). A C2HC RNF-type zinc finger spans residues 98–117 (CRGCNKKVTLAKMRAHISSC). The UIM domain occupies 221-237 (DEEAAFQAALALSLSEN).

It localises to the cytoplasm. It catalyses the reaction S-ubiquitinyl-[E2 ubiquitin-conjugating enzyme]-L-cysteine + [acceptor protein]-L-lysine = [E2 ubiquitin-conjugating enzyme]-L-cysteine + N(6)-ubiquitinyl-[acceptor protein]-L-lysine.. The protein operates within protein modification; protein ubiquitination. In terms of biological role, E3 ubiquitin-protein ligase that promotes the ubiquitination of different substrates. In turn, participates in different biological processes including interferon production or autophagy. Plays a role in the activation of RNA virus-induced interferon-beta production by promoting the ubiquitination of TRAF3 and TRAF6. Also plays a role in the early recruitment of autophagy adapters to bacteria. Mediates 'Lys-29' and 'Lys-33'-linked ubiquitination of SQSTM1 leading to xenophagic targeting of bacteria and inhibition of their replication. This chain is E3 ubiquitin-protein ligase RNF166 (Rnf166), found in Mus musculus (Mouse).